The sequence spans 163 residues: MPTPKKGARLGGSASHQKKILSNLAASLFEHGAIKTTDAKAKALRPYAEKLITKAKSGSVADRRNVLALVPNKEIVAYLFNELAPKFENRPGGYTRIIKLENRKGDNAPMSQISLVLEETVSAEASRATRASASKKAAEEAETEEVVEAPAEETATEEAAEEK.

Positions 123–135 are enriched in low complexity; the sequence is AEASRATRASASK. Residues 123 to 163 are disordered; sequence AEASRATRASASKKAAEEAETEEVVEAPAEETATEEAAEEK. Residues 140-163 are compositionally biased toward acidic residues; sequence EAETEEVVEAPAEETATEEAAEEK.

It belongs to the bacterial ribosomal protein bL17 family. In terms of assembly, part of the 50S ribosomal subunit. Contacts protein L32.

This chain is Large ribosomal subunit protein bL17, found in Corynebacterium glutamicum (strain ATCC 13032 / DSM 20300 / JCM 1318 / BCRC 11384 / CCUG 27702 / LMG 3730 / NBRC 12168 / NCIMB 10025 / NRRL B-2784 / 534).